A 402-amino-acid chain; its full sequence is Type II NADH:quinone oxidoreductase (402 aa).

FAD is bound by residues 12–16 (GAGYA), 39–40 (NK), and valine 83. Glutamate 172 is a catalytic residue. Residues aspartate 302, 319 to 320 (AQ), and lysine 379 contribute to the FAD site.

This sequence belongs to the NADH dehydrogenase family. FAD is required as a cofactor.

It is found in the cell membrane. It catalyses the reaction a quinone + NADH + H(+) = a quinol + NAD(+). Alternative, nonproton pumping NADH:quinone oxidoreductase that delivers electrons to the respiratory chain by oxidation of NADH and reduction of quinones, and contributes to the regeneration of NAD(+). This chain is Type II NADH:quinone oxidoreductase, found in Staphylococcus haemolyticus (strain JCSC1435).